A 264-amino-acid polypeptide reads, in one-letter code: 3-methyl-2-oxobutanoate hydroxymethyltransferase (264 aa).

Positions 45 and 84 each coordinate Mg(2+). Residues 45-46 (DS), Asp84, and Lys112 contribute to the 3-methyl-2-oxobutanoate site. Glu114 is a binding site for Mg(2+). Residue Glu181 is the Proton acceptor of the active site.

Belongs to the PanB family. As to quaternary structure, homodecamer; pentamer of dimers. Mg(2+) is required as a cofactor.

The protein localises to the cytoplasm. It carries out the reaction 3-methyl-2-oxobutanoate + (6R)-5,10-methylene-5,6,7,8-tetrahydrofolate + H2O = 2-dehydropantoate + (6S)-5,6,7,8-tetrahydrofolate. It participates in cofactor biosynthesis; (R)-pantothenate biosynthesis; (R)-pantoate from 3-methyl-2-oxobutanoate: step 1/2. Its function is as follows. Catalyzes the reversible reaction in which hydroxymethyl group from 5,10-methylenetetrahydrofolate is transferred onto alpha-ketoisovalerate to form ketopantoate. This chain is 3-methyl-2-oxobutanoate hydroxymethyltransferase, found in Aeromonas hydrophila subsp. hydrophila (strain ATCC 7966 / DSM 30187 / BCRC 13018 / CCUG 14551 / JCM 1027 / KCTC 2358 / NCIMB 9240 / NCTC 8049).